Reading from the N-terminus, the 324-residue chain is Phospho-N-acetylmuramoyl-pentapeptide-transferase (324 aa).

The next 10 membrane-spanning stretches (helical) occupy residues 5–25 (GLLVTAGVAFLISVALSPLFI), 52–72 (PTMGGIVIYVSMMVTTLIMAI), 77–97 (LGAEVSLLLLVTFGYGLIGFL), 122–142 (VIAIAFFLIGKGQAFHTYIMI), 149–169 (FELGWAYFVLVLFMLIGGSNA), 176–196 (LDGLLSGTAAIAFGAFSIIAV), 201–221 (FGVAIFCMAVVGAVLGFLVFN), 227–247 (VFMGDTGSLALGGAIAAVAIL), 253–273 (LLVIIGGVFVAETLSVIIQVI), and 302–322 (VVVTFWSVGFLLAVLGIYIGV).

Belongs to the glycosyltransferase 4 family. MraY subfamily. Mg(2+) serves as cofactor.

It is found in the cell membrane. It catalyses the reaction UDP-N-acetyl-alpha-D-muramoyl-L-alanyl-gamma-D-glutamyl-meso-2,6-diaminopimeloyl-D-alanyl-D-alanine + di-trans,octa-cis-undecaprenyl phosphate = di-trans,octa-cis-undecaprenyl diphospho-N-acetyl-alpha-D-muramoyl-L-alanyl-D-glutamyl-meso-2,6-diaminopimeloyl-D-alanyl-D-alanine + UMP. It functions in the pathway cell wall biogenesis; peptidoglycan biosynthesis. Its function is as follows. Catalyzes the initial step of the lipid cycle reactions in the biosynthesis of the cell wall peptidoglycan: transfers peptidoglycan precursor phospho-MurNAc-pentapeptide from UDP-MurNAc-pentapeptide onto the lipid carrier undecaprenyl phosphate, yielding undecaprenyl-pyrophosphoryl-MurNAc-pentapeptide, known as lipid I. The chain is Phospho-N-acetylmuramoyl-pentapeptide-transferase from Bacillus mycoides (strain KBAB4) (Bacillus weihenstephanensis).